Consider the following 504-residue polypeptide: ATP synthase subunit alpha, chloroplastic (504 aa).

An ATP-binding site is contributed by 170–177 (GDRQTGKT).

It belongs to the ATPase alpha/beta chains family. F-type ATPases have 2 components, CF(1) - the catalytic core - and CF(0) - the membrane proton channel. CF(1) has five subunits: alpha(3), beta(3), gamma(1), delta(1), epsilon(1). CF(0) has four main subunits: a, b, b' and c.

It localises to the plastid. The protein resides in the chloroplast thylakoid membrane. The catalysed reaction is ATP + H2O + 4 H(+)(in) = ADP + phosphate + 5 H(+)(out). Functionally, produces ATP from ADP in the presence of a proton gradient across the membrane. The alpha chain is a regulatory subunit. The polypeptide is ATP synthase subunit alpha, chloroplastic (Hordeum vulgare (Barley)).